The sequence spans 1029 residues: Protein phosphatase 1 regulatory subunit 12A (1029 aa).

The KVKF motif motif lies at 35 to 38 (KVKF). ANK repeat units follow at residues 39–68 (DDGA…DINY), 72–101 (DGLT…NINQ), 105–134 (EGWI…HVGA), 138–164 (EGDT…RQGV), 198–227 (SGGT…DVNI), and 231–260 (DGWT…DMET). (3S)-3-hydroxyasparagine; by HIF1AN is present on residues Asn-67 and Asn-100. Asn-226 carries the post-translational modification (3S)-3-hydroxyasparagine; by HIF1AN. The disordered stretch occupies residues 290–786 (LHSEKRDKKS…APSSSSLSTL (497 aa)). Basic and acidic residues predominate over residues 291–300 (HSEKRDKKSP). Position 299 is a phosphoserine (Ser-299). Residues 302–314 (IESTANMENNQPQ) are compositionally biased toward polar residues. Basic and acidic residues predominate over residues 318–353 (KNKETLIIEPEKNASRIESLEHEKADEEEEGKKDES). Residues 357 to 369 (SEEDEEDDSESEA) are compositionally biased toward acidic residues. Residues 385-402 (TSSTQAAPAAVTAPTLSS) show a composition bias toward low complexity. Phosphoserine occurs at positions 422 and 432. The span at 422-432 (SPKEEERKDES) shows a compositional bias: basic and acidic residues. Position 443 is a phosphothreonine (Thr-443). Ser-445 bears the Phosphoserine; by NUAK1 mark. Tyr-446 is subject to Phosphotyrosine. The segment covering 469-480 (RSASSPRLSSSL) has biased composition (low complexity). Ser-472 is modified (phosphoserine; by NUAK1). The residue at position 473 (Ser-473) is a Phosphoserine; by CDK1. Ser-477 carries the phosphoserine modification. The span at 481–491 (DNKEKEKDNKG) shows a compositional bias: basic and acidic residues. Phosphoserine is present on residues Ser-507 and Ser-509. A compositionally biased stretch (polar residues) spans 540-551 (NSSINEGSTYHR). Over residues 564 to 578 (SCSVPSTTSTPTVTS) the composition is skewed to low complexity. Over residues 585–594 (SLPSSTSTAA) the composition is skewed to polar residues. Positions 596–610 (TPPGSSSAGTQSSTS) are enriched in low complexity. Ser-601 and Ser-618 each carry phosphoserine. Positions 614–625 (WAEDSTEKEKDS) are enriched in basic and acidic residues. Residues 626–656 (APTAVTIPVAPTVVNAAAPSTTTLTTTTAGT) show a composition bias toward low complexity. Basic and acidic residues predominate over residues 671–680 (VRDEESESQR). The tract at residues 680 to 863 (RKARSRQARQ…VSFWTQDSDE (184 aa)) is interaction with ROCK2. A compositionally biased stretch (basic residues) spans 681 to 691 (KARSRQARQSR). Ser-690 and Ser-693 each carry phosphoserine; by PKA and PKG; in vitro. The residue at position 694 (Thr-694) is a Phosphothreonine; by ROCK1, ROCK2, CDC42BP, ZIPK/DAPK3 and RAF1. The segment covering 716–765 (RTREQENEEKEKEEKEKQDKEKQEEKKESEASREDEYKQKYSRTYDETYT) has biased composition (basic and acidic residues). Over residues 771 to 786 (STSSSSAPSSSSLSTL) the composition is skewed to low complexity. The residue at position 801 (Ser-801) is a Phosphoserine. A disordered region spans residues 808–927 (AYSRGLAKEN…PYSSRLEKDD (120 aa)). Residues 813 to 839 (LAKENEREGEKKEEEKEGEDKSQPKSI) are compositionally biased toward basic and acidic residues. The span at 840–851 (RERRRPREKRRS) shows a compositional bias: basic residues. Ser-851 carries the post-translational modification Phosphoserine; by ROCK2. Phosphoserine is present on residues Ser-861 and Ser-870. The span at 866-882 (QERQSDTEDGSSKRETQ) shows a compositional bias: basic and acidic residues. Over residues 883–897 (TDSVSRYDSSSTSSS) the composition is skewed to low complexity. Residues Ser-902 and Ser-907 each carry the phosphoserine modification. Ser-909 is modified (phosphoserine; by NUAK1). A compositionally biased stretch (basic and acidic residues) spans 913–927 (LEDRKPYSSRLEKDD). Phosphoserine is present on Ser-994.

PP1 comprises a catalytic subunit, PPP1CA, PPP1CB or PPP1CC, and one or several targeting or regulatory subunits. PPP1R12A mediates binding to myosin. Interacts with ARHA and CIT. Binds PPP1R12B, ROCK1 and IL16. Interacts directly with PRKG1. Non-covalent dimer of 2 dimers; PRKG1-PRKG1 and PPP1R12A-PPP1R12A. Interacts with SMTNL1. Interacts with PPP1CB; the interaction is direct. Interacts (when phosphorylated at Ser-445, Ser-472 and Ser-910) with 14-3-3. Interacts with ROCK1 and ROCK2. Interacts with isoform 1 and isoform 2 of ZIPK/DAPK3. Interacts with RAF1. Interacts with HIF1AN. Interacts with NCKAP1L. Phosphorylated by CIT (Rho-associated kinase). Phosphorylated cooperatively by ROCK1 and CDC42BP on Thr-694. Phosphorylated on upon DNA damage, probably by ATM or ATR. In vitro, phosphorylation of Ser-693 by PKA and PKG appears to prevent phosphorylation of the inhibitory site Thr-694, probably mediated by PRKG1. Phosphorylation at Ser-445, Ser-472 and Ser-909 by NUAK1 promotes interaction with 14-3-3, leading to inhibit interaction with myosin light chain MLC2, preventing dephosphorylation of MLC2. May be phosphorylated at Thr-694 by DMPK; may inhibit the myosin phosphatase activity. Phosphorylated at Ser-473 by CDK1 during mitosis, creating docking sites for the POLO box domains of PLK1. Subsequently, PLK1 binds and phosphorylates PPP1R12A. In terms of tissue distribution, expressed in striated and vascular smooth muscle, specificcally in type 2a fibers (at protein level). Expression levels are 20-30% higher in developed males than females (at protein level).

The protein resides in the cytoplasm. The protein localises to the cytoskeleton. Its subcellular location is the stress fiber. In terms of biological role, key regulator of protein phosphatase 1C (PPP1C). Mediates binding to myosin. As part of the PPP1C complex, involved in dephosphorylation of PLK1. Capable of inhibiting HIF1AN-dependent suppression of HIF1A activity. The sequence is that of Protein phosphatase 1 regulatory subunit 12A from Mus musculus (Mouse).